Consider the following 396-residue polypeptide: Protein-export membrane protein SecD (396 aa).

Transmembrane regions (helical) follow at residues 12-32, 243-263, 272-292, 298-318, 338-358, and 360-380; these read ILIL…KGLD, LKGT…IVSI, IPIL…ASLI, LPSI…QIVI, FFII…LFVL, and VGML…GIFI.

This sequence belongs to the SecD/SecF family. SecD subfamily. Part of the protein translocation apparatus. Forms a complex with SecF.

It is found in the cell membrane. Involved in protein export. This Methanocaldococcus jannaschii (strain ATCC 43067 / DSM 2661 / JAL-1 / JCM 10045 / NBRC 100440) (Methanococcus jannaschii) protein is Protein-export membrane protein SecD.